Here is a 414-residue protein sequence, read N- to C-terminus: Putative ankyrin repeat protein BB_B28 (414 aa).

2 ANK repeats span residues 326 to 355 (NGNPIFTYAINVKAKSIINYLITKEFNINL) and 359 to 389 (NSQTALHSAIIQKYDLNFIKSLIEKGANPNI).

This Borreliella burgdorferi (strain ATCC 35210 / DSM 4680 / CIP 102532 / B31) (Borrelia burgdorferi) protein is Putative ankyrin repeat protein BB_B28.